A 303-amino-acid chain; its full sequence is Glutaminase (303 aa).

Residues serine 63, asparagine 113, glutamate 157, asparagine 164, tyrosine 188, tyrosine 239, and valine 257 each contribute to the substrate site.

The protein belongs to the glutaminase family. Homotetramer.

The enzyme catalyses L-glutamine + H2O = L-glutamate + NH4(+). This chain is Glutaminase, found in Saccharopolyspora erythraea (strain ATCC 11635 / DSM 40517 / JCM 4748 / NBRC 13426 / NCIMB 8594 / NRRL 2338).